The primary structure comprises 443 residues: Threonine/serine transporter TdcC (443 aa).

11 consecutive transmembrane segments (helical) span residues 22–42, 44–64, 97–117, 140–160, 163–183, 207–227, 261–281, 311–331, 366–386, 389–409, and 423–443; these read TTWT…FFPI, AGFG…PIAF, GVVI…IYGV, FVAL…KDLM, VMSY…LSLI, ILIT…FSPI, MLMV…LSPA, FAIT…FKSF, LSMI…PNIL, IEAM…MYAI, and DNVF…YKLF.

Belongs to the amino acid/polyamine transporter 2 family. SdaC/TdcC subfamily.

It is found in the cell inner membrane. The catalysed reaction is L-threonine(in) + H(+)(in) = L-threonine(out) + H(+)(out). It catalyses the reaction L-serine(in) + H(+)(in) = L-serine(out) + H(+)(out). In terms of biological role, involved in the import of threonine and serine into the cell, with the concomitant import of a proton (symport system). The protein is Threonine/serine transporter TdcC of Shigella flexneri serotype 5b (strain 8401).